The chain runs to 60 residues: Defensin-like protein 4 (60 aa).

Intrachain disulfides connect cysteine 4–cysteine 56, cysteine 17–cysteine 41, cysteine 26–cysteine 51, and cysteine 30–cysteine 53.

Belongs to the DEFL family. Protease inhibitor I18 (RTI/MTI-2) subfamily.

Its subcellular location is the secreted. Its function is as follows. Inhibits trypsin and chymotrypsin. This chain is Defensin-like protein 4, found in Brassica napus (Rape).